Here is a 45-residue protein sequence, read N- to C-terminus: Iota-conotoxin-like R11.13 (45 aa).

Intrachain disulfides connect Cys5/Cys19, Cys12/Cys22, Cys18/Cys27, and Cys21/Cys36. Position 43 is a D-leucine (Leu43). A propeptide (removed by a carboxypeptidase) is located at residue Arg45.

The protein belongs to the conotoxin I1 superfamily. As to expression, expressed by the venom duct.

It localises to the secreted. In terms of biological role, iota-conotoxins bind to voltage-gated sodium channels (Nav) and act as agonists by shifting the voltage-dependence of activation to more hyperpolarized levels. Produces general excitatory symptoms. This Conus radiatus (Rayed cone) protein is Iota-conotoxin-like R11.13.